A 419-amino-acid polypeptide reads, in one-letter code: Probable G-protein coupled receptor 63 (419 aa).

Over 1–81 (MVFSAVLTAF…AFKSLNLPLQ (81 aa)) the chain is Extracellular. Asparagine 16, asparagine 28, and asparagine 62 each carry an N-linked (GlcNAc...) asparagine glycan. The helical transmembrane segment at 82–104 (ITLSAIMIFILFVSFLGNLVVCL) threads the bilayer. At 105-115 (MVYQKAAMRSA) the chain is on the cytoplasmic side. The helical transmembrane segment at 116 to 138 (INILLASLAFADMLLAVLNMPFA) threads the bilayer. The Extracellular portion of the chain corresponds to 139–157 (LVTILTTRWIFGKFFCRVS). The helical transmembrane segment at 158-177 (AMFFWLFVIEGVAILLIISI) threads the bilayer. At 178 to 196 (DRFLIIVQRQDKLNPYRAK) the chain is on the cytoplasmic side. A helical membrane pass occupies residues 197–216 (VLIAVSWATSFCVAFPLAVG). At 217–240 (NPDLQIPSRAPQCVFGYTTNPGYQ) the chain is on the extracellular side. A helical membrane pass occupies residues 241 to 263 (AYVILISLISFFIPFLVILYSFM). Topologically, residues 264 to 315 (GILNTLRHNALRIHSYPEGICLSQASKLGLMSLQRPFQMSIDMGFKTRAFTT) are cytoplasmic. The chain crosses the membrane as a helical span at residues 316–338 (ILILFAVFIVCWAPFTTYSLVAT). Residues 339–352 (FSKHFYYQHNFFEI) are Extracellular-facing. The chain crosses the membrane as a helical span at residues 353 to 375 (STWLLWLCYLKSALNPLIYYWRI). Topologically, residues 376–419 (KKFHDACLDMMPKSFKFLPQLPGHTKRRIRPSAVYVCGEHRTVV) are cytoplasmic.

The protein belongs to the G-protein coupled receptor 1 family. Expressed in brain; detected in the frontal cortex, with lower levels in the thalamus, caudate, hypothalamus and midbrain.

It localises to the cell membrane. Its function is as follows. Orphan receptor. May play a role in brain function. The protein is Probable G-protein coupled receptor 63 (GPR63) of Homo sapiens (Human).